A 90-amino-acid chain; its full sequence is Probable Fe(2+)-trafficking protein (90 aa).

The protein belongs to the Fe(2+)-trafficking protein family.

Its function is as follows. Could be a mediator in iron transactions between iron acquisition and iron-requiring processes, such as synthesis and/or repair of Fe-S clusters in biosynthetic enzymes. The chain is Probable Fe(2+)-trafficking protein from Nitrosospira multiformis (strain ATCC 25196 / NCIMB 11849 / C 71).